The sequence spans 725 residues: Eukaryotic translation initiation factor 3 subunit B (725 aa).

An RRM domain is found at 46 to 130 (NCVFIAGIPV…HTFTARSFKD (85 aa)). WD repeat units follow at residues 202–240 (RANW…RAHR), 242–280 (AHTN…SLRI), 354–395 (VNIE…SMQR), 462–504 (PLSE…HAPK), 510–552 (DAGV…AKRT), and 554–594 (VIEH…FTFQ).

Belongs to the eIF-3 subunit B family. In terms of assembly, component of the eukaryotic translation initiation factor 3 (eIF-3) complex.

It is found in the cytoplasm. Its function is as follows. RNA-binding component of the eukaryotic translation initiation factor 3 (eIF-3) complex, which is involved in protein synthesis of a specialized repertoire of mRNAs and, together with other initiation factors, stimulates binding of mRNA and methionyl-tRNAi to the 40S ribosome. The eIF-3 complex specifically targets and initiates translation of a subset of mRNAs involved in cell proliferation. The protein is Eukaryotic translation initiation factor 3 subunit B of Caenorhabditis elegans.